The following is a 329-amino-acid chain: MLTHDLHEKTKHYISIYAELKTKLKWKVSHDQILMLISSAYIVNKREFDFQRFYDLSSYIKSNIGSFSTLNSHHRFTVASILDIHFQHEAKQTFQTFIDVYNEMVKLGYKRDMFTYLSALILLTGKSETTNQKEQMNMGLAVYQQMKKNHYFLTSTQNVPLAVLLGENGKGLQALQKAETCYQLLAANGFKKGQYLHQVSHILALQSEKEPEMLVSACKQIYQSITESVKKTKDYHYPDLALLTFLEEPDIKTVLCITDELNQEKAFKWQKEMNFKIAVSLYLSEHMEKNLLMESGLYTAIETVIQAQQAAATAAIISSTAASHTHDGN.

This is an uncharacterized protein from Bacillus subtilis (strain 168).